The chain runs to 760 residues: Formin-like protein 8 (760 aa).

The N-terminal stretch at 1 to 29 (MAAMFNHPWPNLTLIYFFFIVVLPFQSLS) is a signal peptide. Residues 52-63 (PLLPPSSNPSPP) show a composition bias toward pro residues. The tract at residues 52–71 (PLLPPSSNPSPPSNNSSSSD) is disordered. A helical transmembrane segment spans residues 78–98 (AVLITAASTLLVAGVFFFCLQ). Residues 204 to 313 (TEIPLLRGRS…VKLKPLHWDK (110 aa)) are disordered. A compositionally biased stretch (pro residues) spans 253–274 (TPSPPPPIKKGSSPSPPPPPPV). Residues 296-732 (SGGETSKQVK…GSPISPSSQR (437 aa)) form the FH2 domain.

This sequence belongs to the formin-like family. Class-I subfamily. As to quaternary structure, interacts with profilin.

The protein localises to the cell membrane. Its function is as follows. Might be involved in the organization and polarity of the actin cytoskeleton. Interacts with the barbed end of actin filaments and nucleates actin-filament polymerization in vitro. The polypeptide is Formin-like protein 8 (FH8) (Arabidopsis thaliana (Mouse-ear cress)).